A 492-amino-acid chain; its full sequence is 3-octaprenyl-4-hydroxybenzoate carboxy-lyase (492 aa).

Asparagine 175 is a binding site for Mn(2+). Prenylated FMN contacts are provided by residues isoleucine 178–arginine 180, arginine 192–leucine 194, and arginine 197–glycine 198. Glutamate 241 is a Mn(2+) binding site. Aspartate 290 serves as the catalytic Proton donor.

Belongs to the UbiD family. In terms of assembly, homohexamer. The cofactor is prenylated FMN. Requires Mn(2+) as cofactor.

The protein localises to the cell membrane. The enzyme catalyses a 4-hydroxy-3-(all-trans-polyprenyl)benzoate + H(+) = a 2-(all-trans-polyprenyl)phenol + CO2. The protein operates within cofactor biosynthesis; ubiquinone biosynthesis. Functionally, catalyzes the decarboxylation of 3-octaprenyl-4-hydroxy benzoate to 2-octaprenylphenol, an intermediate step in ubiquinone biosynthesis. The chain is 3-octaprenyl-4-hydroxybenzoate carboxy-lyase from Salmonella paratyphi A (strain ATCC 9150 / SARB42).